The chain runs to 518 residues: Endoglucanase 18 (518 aa).

Topologically, residues 1 to 35 (MANCVRCCCWLLVLMLMALAITAAVVFVRYKNGEG) are cytoplasmic. Residues 36 to 56 (VFPFPGVPGAVDHKYADALAV) traverse the membrane as a helical segment. Residues 57–518 (ALQFFQVQKS…STSSLARSLS (462 aa)) lie on the Extracellular side of the membrane. A glycan (N-linked (GlcNAc...) asparagine) is linked at N71. The active-site Nucleophile is the D101. Residues N214, N251, and N272 are each glycosylated (N-linked (GlcNAc...) asparagine). H436 is a catalytic residue. An N-linked (GlcNAc...) asparagine glycan is attached at N477. Active-site residues include D482 and E491.

The protein belongs to the glycosyl hydrolase 9 (cellulase E) family.

It is found in the membrane. The catalysed reaction is Endohydrolysis of (1-&gt;4)-beta-D-glucosidic linkages in cellulose, lichenin and cereal beta-D-glucans.. This Oryza sativa subsp. japonica (Rice) protein is Endoglucanase 18.